Here is a 358-residue protein sequence, read N- to C-terminus: Heme A synthase (358 aa).

8 helical membrane-spanning segments follow: residues Ile-22–Ala-42, Val-107–Lys-127, Ile-133–Trp-153, Leu-172–Gly-192, Phe-208–Gly-228, Phe-269–Val-289, Ala-302–His-322, and Val-324–Val-344. His-271 is a heme binding site. His-332 lines the heme pocket.

This sequence belongs to the COX15/CtaA family. Type 2 subfamily. In terms of assembly, interacts with CtaB. Heme b is required as a cofactor.

Its subcellular location is the cell membrane. It catalyses the reaction Fe(II)-heme o + 2 A + H2O = Fe(II)-heme a + 2 AH2. It participates in porphyrin-containing compound metabolism; heme A biosynthesis; heme A from heme O: step 1/1. Catalyzes the conversion of heme O to heme A by two successive hydroxylations of the methyl group at C8. The first hydroxylation forms heme I, the second hydroxylation results in an unstable dihydroxymethyl group, which spontaneously dehydrates, resulting in the formyl group of heme A. In Bartonella tribocorum (strain CIP 105476 / IBS 506), this protein is Heme A synthase.